A 76-amino-acid chain; its full sequence is Conotoxin TxMEKL-011 (76 aa).

The signal sequence occupies residues 1-19 (MEKLTILLLVAAVLMSTQA). Residues 20 to 45 (LVERAGENRSKENIKFLLKRKRAADR) constitute a propeptide that is removed on maturation. 3 cysteine pairs are disulfide-bonded: cysteine 51-cysteine 65, cysteine 58-cysteine 69, and cysteine 64-cysteine 73.

It belongs to the conotoxin O2 superfamily. Expressed by the venom duct.

The protein localises to the secreted. The polypeptide is Conotoxin TxMEKL-011 (Conus textile (Cloth-of-gold cone)).